The following is a 371-amino-acid chain: Cytochrome b (371 aa).

4 consecutive transmembrane segments (helical) span residues phenylalanine 25 to valine 45, tryptophan 69 to isoleucine 90, tryptophan 105 to leucine 125, and phenylalanine 170 to isoleucine 190. Heme b-binding residues include histidine 75 and histidine 89. Residues histidine 174 and histidine 188 each coordinate heme b. Histidine 193 contacts a ubiquinone. 4 consecutive transmembrane segments (helical) span residues histidine 218–phenylalanine 238, leucine 280–histidine 300, leucine 312–threonine 332, and phenylalanine 339–proline 358.

It belongs to the cytochrome b family. As to quaternary structure, the cytochrome bc1 complex contains 3 respiratory subunits (MT-CYB, CYC1 and UQCRFS1), 2 core proteins (UQCRC1 and UQCRC2) and probably 6 low-molecular weight proteins. It depends on heme b as a cofactor.

It localises to the mitochondrion inner membrane. Component of the ubiquinol-cytochrome c reductase complex (complex III or cytochrome b-c1 complex) that is part of the mitochondrial respiratory chain. The b-c1 complex mediates electron transfer from ubiquinol to cytochrome c. Contributes to the generation of a proton gradient across the mitochondrial membrane that is then used for ATP synthesis. This chain is Cytochrome b (MT-CYB), found in Aspidites melanocephalus (Black-headed python).